The primary structure comprises 182 residues: Isopentenyl-diphosphate Delta-isomerase (182 aa).

The Mn(2+) site is built by His25 and His32. The Nudix hydrolase domain maps to 30–164; the sequence is LLHLAFSSWL…PWAFSPWMVM (135 aa). Residue Cys67 is part of the active site. Residue His69 participates in Mn(2+) binding. Mg(2+) is bound at residue Glu87. Residues Glu114 and Glu116 each contribute to the Mn(2+) site. Glu116 is an active-site residue.

It belongs to the IPP isomerase type 1 family. In terms of assembly, homodimer. The cofactor is Mg(2+). Requires Mn(2+) as cofactor.

It is found in the cytoplasm. The catalysed reaction is isopentenyl diphosphate = dimethylallyl diphosphate. The protein operates within isoprenoid biosynthesis; dimethylallyl diphosphate biosynthesis; dimethylallyl diphosphate from isopentenyl diphosphate: step 1/1. Catalyzes the 1,3-allylic rearrangement of the homoallylic substrate isopentenyl (IPP) to its highly electrophilic allylic isomer, dimethylallyl diphosphate (DMAPP). This Escherichia coli O17:K52:H18 (strain UMN026 / ExPEC) protein is Isopentenyl-diphosphate Delta-isomerase.